A 129-amino-acid chain; its full sequence is Fluoride-specific ion channel FluC 2 (129 aa).

The next 4 helical transmembrane spans lie at 4 to 24 (LDVMWVCLGGGVGSLGRWWIG), 39 to 59 (TFLINISGAFVIGYLSVLFGV), 65 to 85 (YGTMLNAGVLTGILGGYTTFS), and 104 to 124 (VFYLVASVLSGLFAAWLGAML). 2 residues coordinate Na(+): glycine 79 and threonine 82.

It belongs to the fluoride channel Fluc/FEX (TC 1.A.43) family.

Its subcellular location is the cell inner membrane. The enzyme catalyses fluoride(in) = fluoride(out). Na(+) is not transported, but it plays an essential structural role and its presence is essential for fluoride channel function. Fluoride-specific ion channel. Important for reducing fluoride concentration in the cell, thus reducing its toxicity. This is Fluoride-specific ion channel FluC 2 from Brucella abortus biovar 1 (strain 9-941).